The primary structure comprises 254 residues: Trypsin (254 aa).

An N-terminal signal peptide occupies residues 1–16 (MLRFIAVFALVNCALA). A propeptide spans 17–26 (GTLPNDLDGR) (activation peptide). The Peptidase S1 domain occupies 27–252 (IVNGVDTTIE…VRSWIEKTAK (226 aa)). An intrachain disulfide couples C53 to C69. Catalysis depends on charge relay system residues H68 and D113. Cystine bridges form between C154-C158, C178-C195, and C204-C228. The active-site Charge relay system is the S208.

This sequence belongs to the peptidase S1 family.

It localises to the secreted. The protein resides in the extracellular space. The enzyme catalyses Preferential cleavage: Arg-|-Xaa, Lys-|-Xaa.. Functionally, involved in digestion of a protein meal. This Sarcophaga bullata (Grey flesh fly) protein is Trypsin.